Consider the following 197-residue polypeptide: Glycerol-3-phosphate acyltransferase (197 aa).

Transmembrane regions (helical) follow at residues Met-1–Ile-21, Leu-50–Ala-70, Ile-82–Phe-102, Leu-112–Ala-132, and Gly-159–His-179.

It belongs to the PlsY family. In terms of assembly, probably interacts with PlsX.

Its subcellular location is the cell inner membrane. The catalysed reaction is an acyl phosphate + sn-glycerol 3-phosphate = a 1-acyl-sn-glycero-3-phosphate + phosphate. The protein operates within lipid metabolism; phospholipid metabolism. Catalyzes the transfer of an acyl group from acyl-phosphate (acyl-PO(4)) to glycerol-3-phosphate (G3P) to form lysophosphatidic acid (LPA). This enzyme utilizes acyl-phosphate as fatty acyl donor, but not acyl-CoA or acyl-ACP. This chain is Glycerol-3-phosphate acyltransferase, found in Desulfotalea psychrophila (strain LSv54 / DSM 12343).